A 1734-amino-acid polypeptide reads, in one-letter code: Protein TIC 214 (1734 aa).

6 helical membrane passes run 19 to 39, 68 to 88, 91 to 111, 133 to 153, 176 to 196, and 227 to 247; these read IINS…FSIG, FIAG…HLAL, PHTI…WNNH, VFLN…SSML, VGWL…LVWI, and IFSI…PSPI. Residues 1433 to 1485 adopt a coiled-coil conformation; it reads NLNNEEKELADEVELESDNEKQINPESALSNQEKTIQEIYAESKKKKRQNKKQ.

This sequence belongs to the TIC214 family. As to quaternary structure, part of the Tic complex.

Its subcellular location is the plastid. The protein resides in the chloroplast inner membrane. Its function is as follows. Involved in protein precursor import into chloroplasts. May be part of an intermediate translocation complex acting as a protein-conducting channel at the inner envelope. The sequence is that of Protein TIC 214 from Lepidium virginicum (Virginia pepperweed).